We begin with the raw amino-acid sequence, 593 residues long: High affinity cGMP-specific 3',5'-cyclic phosphodiesterase 9A (593 aa).

Residues 87–141 are disordered; it reads SAGVEDKRTTSRGQSAERPLRDRRVVGLEQPRREGAFESGQVEPRPREPQGCYQE. Positions 104–122 are enriched in basic and acidic residues; sequence RPLRDRRVVGLEQPRREGA. The region spanning 236-557 is the PDEase domain; the sequence is PRRDVPTYPK…DRYEELKRID (322 aa). Histidine 312 functions as the Proton donor in the catalytic mechanism. 312–316 serves as a coordination point for 3',5'-cyclic GMP; sequence HNFRH. 3 residues coordinate Zn(2+): histidine 316, histidine 352, and aspartate 353. A 3',5'-cyclic GMP-binding site is contributed by aspartate 353. Aspartate 353 lines the Mg(2+) pocket. Phosphoserine is present on serine 379. Residues aspartate 462, tyrosine 484, and 512–513 each bind 3',5'-cyclic GMP; that span reads AQ. Aspartate 462 is a Zn(2+) binding site. Residues 564-593 form a disordered region; that stretch reads QKKTDSLTSGATEKSRERSRDVKNSEGDCA. Positions 576 to 593 are enriched in basic and acidic residues; that stretch reads EKSRERSRDVKNSEGDCA.

The protein belongs to the cyclic nucleotide phosphodiesterase family. PDE9 subfamily. In terms of assembly, homodimer. Zn(2+) is required as a cofactor. It depends on Mg(2+) as a cofactor. Expressed in all tissues examined (testis, brain, small intestine, skeletal muscle, heart, lung, thymus, spleen, placenta, kidney, liver, pancreas, ovary and prostate) except blood. Highest levels in brain, heart, kidney, spleen, prostate and colon. Isoform PDE9A12 is found in prostate. In brain, present in the cortex, cerebellum, and subiculum (at protein level). In heart, primarily localizes to myocytes.

The protein resides in the cell projection. It is found in the ruffle membrane. It localises to the cytoplasm. The protein localises to the perinuclear region. Its subcellular location is the golgi apparatus. The protein resides in the endoplasmic reticulum. It is found in the cell membrane. It localises to the sarcolemma. The catalysed reaction is 3',5'-cyclic GMP + H2O = GMP + H(+). The protein operates within purine metabolism; 3',5'-cyclic GMP degradation; GMP from 3',5'-cyclic GMP: step 1/1. Its activity is regulated as follows. Inhibited by zaprinast; inhibitor is however not specific to PDE9A. Specifically inhibited by BAY-73-6691 (1-(2-chlorophenyl)-6-((2R)-3,3,3- trifluoro-2-methylpropyl)-1,5-dihydro-4H-pyrazolo(3,4-d)pyrimidine-4-one). BAY-73-9961 has two enantiomers, (R) and (S), due to the presence of a chiral center, and both forms vary in their pattern of interaction. Specifically inhibited by PF-4181366 (4H-Pyrazolo[3,4-d]pyrimidin-4-one, 1- cyclopentyl-1,5-dihydro-6-[(3S,4S)-4-methyl- 1-(6-quinoxalinylmethyl)-3-pyrrolidinyl]-one). Specifically inhibited by PF-4449613 ((R)-6-(1-(3-phenoxyazetidin-1-yl)ethyl)-1-(tetrahydro-2H-pyran-4-yl)-1H-pyrazolo[3,4-d]pyrimidin- 4(5H)-one). Specifically inhibited by inhibitor 28 (2-((1-(2-Chlorophenyl)-4-hydroxy-1Hpyrazolo[ 3,4-d]pyrimidin-6-yl)amino)-N-(4- methoxyphenyl)propanamide): inhibitor forms a hydrogen bond with Tyr-484 and Gln-513. Specifically inhibited by 1-Cyclopentyl-6-[(1r)-1-(3-phenoxyazetidin- 1-Yl)ethyl]-1,5-dihydro-4h-pyrazolo[3,4-D] pyrimidin-4-one: inhibitor forms a hydrogen bond with Tyr-484 and Gln-513. Functionally, specifically hydrolyzes the second messenger cGMP, which is a key regulator of many important physiological processes. Highly specific: compared to other members of the cyclic nucleotide phosphodiesterase family, has the highest affinity and selectivity for cGMP. Specifically regulates natriuretic-peptide-dependent cGMP signaling in heart, acting as a regulator of cardiac hypertrophy in myocytes and muscle. Does not regulate nitric oxide-dependent cGMP in heart. Additional experiments are required to confirm whether its ability to hydrolyze natriuretic-peptide-dependent cGMP is specific to heart or is a general feature of the protein. In brain, involved in cognitive function, such as learning and long-term memory. This chain is High affinity cGMP-specific 3',5'-cyclic phosphodiesterase 9A, found in Homo sapiens (Human).